An 867-amino-acid chain; its full sequence is Piwi-like protein 1 (867 aa).

The segment covering 1–11 (MTGRARARARG) has biased composition (basic residues). The interval 1–70 (MTGRARARAR…QRGPQDAPKT (70 aa)) is disordered. Over residues 28–44 (AQKTLPSHPSEQRQSLQ) the composition is skewed to polar residues. A PAZ domain is found at 286–397 (TVLDFMYSLY…LIPELCYLTG (112 aa)). The interval 324-326 (TYR) is required for binding 2'-O-methylated 3'-end of piRNAs. The tract at residues 485–621 (SRETRVAPLI…LQMNCKMGGE (137 aa)) is MID region. Residues 561-853 (IVVCILSSTR…LAFLVGQSIH (293 aa)) enclose the Piwi domain. Active-site residues include Asp-638, Glu-676, Asp-708, and His-842.

It belongs to the argonaute family. Piwi subfamily. It depends on Mg(2+) as a cofactor. In terms of processing, methylated on arginine residues; required for the interaction with Tudor domain-containing protein and subsequent localization to the meiotic nuage, also named P granule.

Its subcellular location is the cytoplasm. Functionally, endoribonuclease that plays a central role in postnatal germ cells by repressing transposable elements and preventing their mobilization, which is essential for the germline integrity. Acts via the piRNA metabolic process, which mediates the repression of transposable elements during meiosis by forming complexes composed of piRNAs and Piwi proteins and govern the methylation and subsequent repression of transposons. Directly binds methylated piRNAs, a class of 24 to 30 nucleotide RNAs that are generated by a Dicer-independent mechanism and are primarily derived from transposons and other repeated sequence elements. Strongly prefers a uridine in the first position of their guide (g1U preference, also named 1U-bias). Besides their function in transposable elements repression, piRNAs are probably involved in other processes during meiosis such as translation regulation. Not involved in the piRNA amplification loop, also named ping-pong amplification cycle. Acts as an endoribonuclease that cleaves transposon messenger RNAs. The chain is Piwi-like protein 1 (PIWIL1) from Gallus gallus (Chicken).